We begin with the raw amino-acid sequence, 320 residues long: Acetyl-coenzyme A carboxylase carboxyl transferase subunit alpha (320 aa).

In terms of domain architecture, CoA carboxyltransferase C-terminal spans 34–288; that stretch reads RLEEALEAAR…GEALERVLAG (255 aa).

It belongs to the AccA family. In terms of assembly, acetyl-CoA carboxylase is a heterohexamer composed of biotin carboxyl carrier protein (AccB), biotin carboxylase (AccC) and two subunits each of ACCase subunit alpha (AccA) and ACCase subunit beta (AccD).

The protein localises to the cytoplasm. The catalysed reaction is N(6)-carboxybiotinyl-L-lysyl-[protein] + acetyl-CoA = N(6)-biotinyl-L-lysyl-[protein] + malonyl-CoA. Its pathway is lipid metabolism; malonyl-CoA biosynthesis; malonyl-CoA from acetyl-CoA: step 1/1. In terms of biological role, component of the acetyl coenzyme A carboxylase (ACC) complex. First, biotin carboxylase catalyzes the carboxylation of biotin on its carrier protein (BCCP) and then the CO(2) group is transferred by the carboxyltransferase to acetyl-CoA to form malonyl-CoA. The sequence is that of Acetyl-coenzyme A carboxylase carboxyl transferase subunit alpha from Rubrobacter xylanophilus (strain DSM 9941 / JCM 11954 / NBRC 16129 / PRD-1).